The sequence spans 438 residues: Glucose-6-phosphate isomerase (438 aa).

The active-site Proton donor is Glu289. Residues His310 and Lys424 contribute to the active site.

Belongs to the GPI family.

Its subcellular location is the cytoplasm. It carries out the reaction alpha-D-glucose 6-phosphate = beta-D-fructose 6-phosphate. It functions in the pathway carbohydrate biosynthesis; gluconeogenesis. The protein operates within carbohydrate degradation; glycolysis; D-glyceraldehyde 3-phosphate and glycerone phosphate from D-glucose: step 2/4. Catalyzes the reversible isomerization of glucose-6-phosphate to fructose-6-phosphate. This is Glucose-6-phosphate isomerase from Oenococcus oeni (strain ATCC BAA-331 / PSU-1).